Here is a 316-residue protein sequence, read N- to C-terminus: Mycothiol acetyltransferase (316 aa).

N-acetyltransferase domains are found at residues 16-153 (REVR…VPAV) and 156-316 (VRIR…PAAN). Position 36 (Glu36) interacts with 1D-myo-inositol 2-(L-cysteinylamino)-2-deoxy-alpha-D-glucopyranoside. Residues 83-85 (LVV) and 91-96 (RRGIGS) each bind acetyl-CoA. 3 residues coordinate 1D-myo-inositol 2-(L-cysteinylamino)-2-deoxy-alpha-D-glucopyranoside: Glu183, Lys228, and Glu238. Acetyl-CoA contacts are provided by residues 242 to 244 (VGV) and 249 to 255 (QGRGLGQ). Tyr283 contacts 1D-myo-inositol 2-(L-cysteinylamino)-2-deoxy-alpha-D-glucopyranoside. 288–293 (NVAAVR) lines the acetyl-CoA pocket.

It belongs to the acetyltransferase family. MshD subfamily. In terms of assembly, monomer.

It carries out the reaction 1D-myo-inositol 2-(L-cysteinylamino)-2-deoxy-alpha-D-glucopyranoside + acetyl-CoA = mycothiol + CoA + H(+). In terms of biological role, catalyzes the transfer of acetyl from acetyl-CoA to desacetylmycothiol (Cys-GlcN-Ins) to form mycothiol. The chain is Mycothiol acetyltransferase from Mycobacterium avium (strain 104).